The sequence spans 178 residues: Caveolin-1 (178 aa).

Ser2 bears the N-acetylserine mark. A Phosphoserine modification is found at Ser2. The interval 2-94 (SGGKYVDSEG…WKASFTTFTV (93 aa)) is required for homooligomerization. At 2–104 (SGGKYVDSEG…TKYWFYRLLS (103 aa)) the chain is on the cytoplasmic side. Position 5 is an N6-acetyllysine; alternate (Lys5). A Glycyl lysine isopeptide (Lys-Gly) (interchain with G-Cter in ubiquitin); alternate cross-link involves residue Lys5. Position 6 is a phosphotyrosine (Tyr6). Ser9 is modified (phosphoserine). At Tyr14 the chain carries Phosphotyrosine; by ABL1. A Phosphotyrosine modification is found at Tyr25. Residues Lys26, Lys30, Lys39, Lys47, and Lys57 each participate in a glycyl lysine isopeptide (Lys-Gly) (interchain with G-Cter in ubiquitin) cross-link. The interval 82–94 (DGIWKASFTTFTV) is interaction with CAVIN3. Positions 105–125 (ALFGIPMALIWGIYFAILSFL) form an intramembrane region, helical. Topologically, residues 126-178 (HIWAVVPCIKSFLIEIQCISRVYSIYVHTFCDPLFEAIGKIFSNIRINMQKEI) are cytoplasmic. Positions 131 to 142 (VPCIKSFLIEIQ) are interacts with SPRY1, SPRY2, SPRY3 and SPRY4. S-palmitoyl cysteine attachment occurs at residues Cys133, Cys143, and Cys156. Residues 149 to 160 (SIYVHTFCDPLF) are interacts with SPRY1, SPRY2, and SPRY4. Positions 167–178 (FSNIRINMQKEI) are interacts with SPRY1, SPRY2, SPRY3 and SPRY4.

Belongs to the caveolin family. In terms of assembly, homooligomer. Interacts with GLIPR2. Interacts with NOSTRIN. Interacts with SNAP25 and STX1A. Interacts (via the N-terminus) with DPP4; the interaction is direct. Interacts with CTNNB1, CDH1 and JUP. Interacts with PACSIN2; this interaction induces membrane tubulation. Interacts with SLC7A9. Interacts with BMX and BTK. Interacts with TGFBR1. Interacts with CAVIN3 (via leucine-zipper domain) in a cholesterol-sensitive manner. Interacts with CAVIN1. Interacts with EHD2 in a cholesterol-dependent manner. Forms a ternary complex with UBXN6 and VCP; mediates CAV1 targeting to lysosomes for degradation. Interacts with ABCG1; this interaction regulates ABCG1-mediated cholesterol efflux. Interacts with NEU3; this interaction enhances NEU3 sialidase activity within caveola. Interacts (via C-terminus) with SPRY1, SPRY2 (via C-terminus), SPRY3, and SPRY4. Interacts with IGFBP5; this interaction allows trafficking of IGFBP5 from the plasma membrane to the nucleus. Phosphorylated at Tyr-14 by ABL1 in response to oxidative stress. Post-translationally, ubiquitinated. Undergo monoubiquitination and multi- and/or polyubiquitination. Monoubiquitination of N-terminal lysines promotes integration in a ternary complex with UBXN6 and VCP which promotes oligomeric CAV1 targeting to lysosomes for degradation. Ubiquitinated by ZNRF1; leading to degradation and modulation of the TLR4-mediated immune response.

It localises to the golgi apparatus membrane. The protein localises to the cell membrane. The protein resides in the membrane. It is found in the caveola. Its subcellular location is the membrane raft. Functionally, may act as a scaffolding protein within caveolar membranes. Forms a stable heterooligomeric complex with CAV2 that targets to lipid rafts and drives caveolae formation. Mediates the recruitment of CAVIN proteins (CAVIN1/2/3/4) to the caveolae. Interacts directly with G-protein alpha subunits and can functionally regulate their activity. Involved in the costimulatory signal essential for T-cell receptor (TCR)-mediated T-cell activation. Its binding to DPP4 induces T-cell proliferation and NF-kappa-B activation in a T-cell receptor/CD3-dependent manner. Recruits CTNNB1 to caveolar membranes and may regulate CTNNB1-mediated signaling through the Wnt pathway. Negatively regulates TGFB1-mediated activation of SMAD2/3 by mediating the internalization of TGFBR1 from membrane rafts leading to its subsequent degradation. Binds 20(S)-hydroxycholesterol (20(S)-OHC). In Muntiacus muntjak (Barking deer), this protein is Caveolin-1 (CAV1).